The sequence spans 375 residues: Putative F-box/kelch-repeat protein At3g24610 (375 aa).

The segment at 1-27 (MSNEAPEVEPHSKRRKKEASPSSSSGF) is disordered. Residues 25–71 (SGFLQSLPEAVAMICLARVSRLDHAALSLVSKSCRSMVLSPELYQTR) enclose the F-box domain. The Kelch repeat unit spans residues 138–183 (KINVWGGCKYKHYYDWGEVFDPKTQTWADMSIPKPVREEKIYVVDS).

This is Putative F-box/kelch-repeat protein At3g24610 from Arabidopsis thaliana (Mouse-ear cress).